Reading from the N-terminus, the 665-residue chain is Phenol hydroxylase (665 aa).

FAD-binding positions include 18 to 19, 43 to 45, 51 to 56, glutamine 118, tyrosine 290, aspartate 358, and 368 to 372; these read PA, DKR, NGQADG, and GQGMN. Aspartate 55 lines the substrate pocket. Tyrosine 290 is a binding site for substrate.

The protein belongs to the PheA/TfdB FAD monooxygenase family. As to quaternary structure, homodimer. FAD is required as a cofactor.

The enzyme catalyses phenol + NADPH + O2 + H(+) = catechol + NADP(+) + H2O. It functions in the pathway aromatic compound metabolism; phenol degradation. Inhibited by excess phenol. Heavy metals such AsCuSO(4), AgNO(3), or HgCl(2) severely inhibit activity. Its function is as follows. Hydroxylates phenol to catechol. Phenol is the best substrate, but the enzyme also accepts isomeric diphenols, hydroxyl-, amino-, halogen- or methyl-substituted phenols and, to a lesser degree, cresols. This chain is Phenol hydroxylase, found in Cutaneotrichosporon cutaneum (Yeast).